Here is a 205-residue protein sequence, read N- to C-terminus: Transcriptional regulator GfcR (205 aa).

The protein belongs to the purine/pyrimidine phosphoribosyltransferase family. GfcR subfamily.

The sequence is that of Transcriptional regulator GfcR from Methanococcus vannielii (strain ATCC 35089 / DSM 1224 / JCM 13029 / OCM 148 / SB).